Here is a 260-residue protein sequence, read N- to C-terminus: Snake venom serine protease KN6 (260 aa).

Residues 1–18 form the signal peptide; the sequence is MVLIRVLANLLILQLSYA. The propeptide occupies 19–24; it reads QKSSEL. One can recognise a Peptidase S1 domain in the interval 25 to 251; it reads VIGGDECNIN…HLDWIQSIIA (227 aa). 5 disulfide bridges follow: Cys31-Cys165, Cys100-Cys258, Cys144-Cys212, Cys176-Cys191, and Cys202-Cys227. Residue His67 is the Charge relay system of the active site. Asn105 carries N-linked (GlcNAc...) asparagine glycosylation. The active-site Charge relay system is Asp112. The N-linked (GlcNAc...) asparagine glycan is linked to Asn172. The Charge relay system role is filled by Ser206. Asn213 and Asn255 each carry an N-linked (GlcNAc...) asparagine glycan.

Belongs to the peptidase S1 family. Snake venom subfamily. As to quaternary structure, monomer. In terms of tissue distribution, expressed by the venom gland.

The protein resides in the secreted. Snake venom serine protease that may act in the hemostasis system of the prey. The polypeptide is Snake venom serine protease KN6 (Trimeresurus stejnegeri (Chinese green tree viper)).